The primary structure comprises 594 residues: Putative diflavin flavoprotein A 4 (594 aa).

Residues Arg57–His250 are zinc metallo-hydrolase. In terms of domain architecture, Flavodoxin-like spans Val279–Ala417. The tract at residues Val445–Tyr594 is flavodoxin-reductase-like.

This sequence in the N-terminal section; belongs to the zinc metallo-hydrolase group 3 family. It in the C-terminal section; belongs to the flavodoxin reductase family. Fe cation serves as cofactor.

In terms of biological role, mediates electron transfer from NADH to oxygen, reducing it to water. This modular protein has 3 redox cofactors, in other organisms the same activity requires 2 or 3 proteins. This Synechocystis sp. (strain ATCC 27184 / PCC 6803 / Kazusa) protein is Putative diflavin flavoprotein A 4 (dfa4).